A 469-amino-acid chain; its full sequence is Ribulose bisphosphate carboxylase large chain (469 aa).

Position 8 is an N6,N6,N6-trimethyllysine (K8). Residues N117 and T167 each contribute to the substrate site. The active-site Proton acceptor is K169. Residue K171 coordinates substrate. K195, D197, and E198 together coordinate Mg(2+). Residue K195 is modified to N6-carboxylysine. The active-site Proton acceptor is H288. Residues R289, H321, and S373 each coordinate substrate.

Belongs to the RuBisCO large chain family. Type I subfamily. Heterohexadecamer of 8 large chains and 8 small chains; disulfide-linked. The disulfide link is formed within the large subunit homodimers. Requires Mg(2+) as cofactor. Post-translationally, the disulfide bond which can form in the large chain dimeric partners within the hexadecamer appears to be associated with oxidative stress and protein turnover.

It is found in the plastid. It localises to the chloroplast. The enzyme catalyses 2 (2R)-3-phosphoglycerate + 2 H(+) = D-ribulose 1,5-bisphosphate + CO2 + H2O. It catalyses the reaction D-ribulose 1,5-bisphosphate + O2 = 2-phosphoglycolate + (2R)-3-phosphoglycerate + 2 H(+). Functionally, ruBisCO catalyzes two reactions: the carboxylation of D-ribulose 1,5-bisphosphate, the primary event in carbon dioxide fixation, as well as the oxidative fragmentation of the pentose substrate in the photorespiration process. Both reactions occur simultaneously and in competition at the same active site. The sequence is that of Ribulose bisphosphate carboxylase large chain from Coleonema pulchellum (Confetti bush).